Reading from the N-terminus, the 112-residue chain is CRISPR-associated endoribonuclease Cas2 2 (112 aa).

Aspartate 15 lines the Mg(2+) pocket.

This sequence belongs to the CRISPR-associated endoribonuclease Cas2 protein family. As to quaternary structure, homodimer, forms a heterotetramer with a Cas1 homodimer. Mg(2+) serves as cofactor.

CRISPR (clustered regularly interspaced short palindromic repeat), is an adaptive immune system that provides protection against mobile genetic elements (viruses, transposable elements and conjugative plasmids). CRISPR clusters contain sequences complementary to antecedent mobile elements and target invading nucleic acids. CRISPR clusters are transcribed and processed into CRISPR RNA (crRNA). Functions as a ssRNA-specific endoribonuclease. Involved in the integration of spacer DNA into the CRISPR cassette. The polypeptide is CRISPR-associated endoribonuclease Cas2 2 (Rhodospirillum rubrum (strain ATCC 11170 / ATH 1.1.1 / DSM 467 / LMG 4362 / NCIMB 8255 / S1)).